The sequence spans 527 residues: GMP synthase [glutamine-hydrolyzing] (527 aa).

The Glutamine amidotransferase type-1 domain maps to 11-209 (RILILDFGSQ…VLNICGCENL (199 aa)). The active-site Nucleophile is Cys-88. Residues His-183 and Glu-185 contribute to the active site. In terms of domain architecture, GMPS ATP-PPase spans 210 to 402 (WTSANIIEDA…LGLPYNMLYR (193 aa)). 237-243 (SGGVDSS) contacts ATP.

In terms of assembly, homodimer.

It catalyses the reaction XMP + L-glutamine + ATP + H2O = GMP + L-glutamate + AMP + diphosphate + 2 H(+). The protein operates within purine metabolism; GMP biosynthesis; GMP from XMP (L-Gln route): step 1/1. Catalyzes the synthesis of GMP from XMP. In Photobacterium profundum (strain SS9), this protein is GMP synthase [glutamine-hydrolyzing].